A 94-amino-acid polypeptide reads, in one-letter code: MDNGIKYAVFTEKSLRLLGKNQYTFNVESGFTKTEIKHWVELFFGVKVVAVNSHRLPGKGRRIGPILGHTMHYRRMIIILQPGYSIPLLDREKN.

The protein belongs to the universal ribosomal protein uL23 family. Part of the 50S ribosomal subunit.

The protein resides in the plastid. The protein localises to the chloroplast. Functionally, binds to 23S rRNA. The sequence is that of Large ribosomal subunit protein uL23cz (rpl23-A) from Agrostis stolonifera (Creeping bentgrass).